Consider the following 427-residue polypeptide: Serine hydroxymethyltransferase (427 aa).

Residues Leu127 and 131-133 (GHL) contribute to the (6S)-5,6,7,8-tetrahydrofolate site. Position 236 is an N6-(pyridoxal phosphate)lysine (Lys236).

The protein belongs to the SHMT family. In terms of assembly, homodimer. Pyridoxal 5'-phosphate serves as cofactor.

The protein resides in the cytoplasm. The catalysed reaction is (6R)-5,10-methylene-5,6,7,8-tetrahydrofolate + glycine + H2O = (6S)-5,6,7,8-tetrahydrofolate + L-serine. It functions in the pathway one-carbon metabolism; tetrahydrofolate interconversion. The protein operates within amino-acid biosynthesis; glycine biosynthesis; glycine from L-serine: step 1/1. Its function is as follows. Catalyzes the reversible interconversion of serine and glycine with tetrahydrofolate (THF) serving as the one-carbon carrier. This reaction serves as the major source of one-carbon groups required for the biosynthesis of purines, thymidylate, methionine, and other important biomolecules. Also exhibits THF-independent aldolase activity toward beta-hydroxyamino acids, producing glycine and aldehydes, via a retro-aldol mechanism. This is Serine hydroxymethyltransferase from Paramagnetospirillum magneticum (strain ATCC 700264 / AMB-1) (Magnetospirillum magneticum).